The following is a 335-amino-acid chain: Biotin synthase (335 aa).

One can recognise a Radical SAM core domain in the interval 41 to 269 (KQIQVCKLIS…TSDVRLSAGR (229 aa)). Positions 56, 60, and 63 each coordinate [4Fe-4S] cluster. [2Fe-2S] cluster is bound by residues cysteine 100, cysteine 132, cysteine 192, and arginine 264.

This sequence belongs to the radical SAM superfamily. Biotin synthase family. As to quaternary structure, homodimer. [4Fe-4S] cluster is required as a cofactor. It depends on [2Fe-2S] cluster as a cofactor.

The enzyme catalyses (4R,5S)-dethiobiotin + (sulfur carrier)-SH + 2 reduced [2Fe-2S]-[ferredoxin] + 2 S-adenosyl-L-methionine = (sulfur carrier)-H + biotin + 2 5'-deoxyadenosine + 2 L-methionine + 2 oxidized [2Fe-2S]-[ferredoxin]. It participates in cofactor biosynthesis; biotin biosynthesis; biotin from 7,8-diaminononanoate: step 2/2. In terms of biological role, catalyzes the conversion of dethiobiotin (DTB) to biotin by the insertion of a sulfur atom into dethiobiotin via a radical-based mechanism. The sequence is that of Biotin synthase from Nostoc sp. (strain PCC 7120 / SAG 25.82 / UTEX 2576).